Consider the following 200-residue polypeptide: Large ribosomal subunit protein uL4 (200 aa).

Positions 43–71 are disordered; the sequence is RAQKTRAEVSGSGKKPWRQKGTGRARSGD.

Belongs to the universal ribosomal protein uL4 family. In terms of assembly, part of the 50S ribosomal subunit.

One of the primary rRNA binding proteins, this protein initially binds near the 5'-end of the 23S rRNA. It is important during the early stages of 50S assembly. It makes multiple contacts with different domains of the 23S rRNA in the assembled 50S subunit and ribosome. Its function is as follows. Forms part of the polypeptide exit tunnel. The protein is Large ribosomal subunit protein uL4 of Actinobacillus pleuropneumoniae serotype 5b (strain L20).